Here is a 319-residue protein sequence, read N- to C-terminus: MKIAVLGAAGGIGQALALLLKLDLPANSILSLYDLAPVTPGVAKDLSHIPTSVKVEGFAGTDPTAAIEGADVILISAGVARKPGMDRSDLFNINAGIIKNLVAKVAEVAPEACIGIITNPVNTTVAIAAEVLKAAGVYNKNKLFGITTLDVIRAEEFVAELKGLPSEDVRVNVIGGHSGTTILPVLSQIQGVSFTDQEVIDLTSRIQNAGTEVVEAKAGGGSATLSMACAASRFAIQLVHALSGKQGIIQNAYVDGGNPASPFFTQPLLLGKNGIDKVLPYGELSSFEETKKEEMLSVLHADIEMGIDFVSKTLAAEVS.

NAD(+) is bound by residues 7-13 (GAAGGIG) and aspartate 34. Substrate is bound by residues arginine 81 and arginine 87. NAD(+) contacts are provided by residues asparagine 94 and 117 to 119 (ITN). Residues asparagine 119 and arginine 153 each coordinate substrate. Histidine 177 serves as the catalytic Proton acceptor. Position 227 (methionine 227) interacts with NAD(+).

Belongs to the LDH/MDH superfamily. MDH type 1 family. In terms of assembly, homodimer.

The enzyme catalyses (S)-malate + NAD(+) = oxaloacetate + NADH + H(+). Catalyzes the reversible oxidation of malate to oxaloacetate. This is Malate dehydrogenase from Psychromonas ingrahamii (strain DSM 17664 / CCUG 51855 / 37).